The sequence spans 1148 residues: Phospholipid-transporting ATPase IB (1148 aa).

The Cytoplasmic segment spans residues Met1–Leu44. Thr5 carries the post-translational modification Phosphothreonine. Residues Pro45–Leu66 traverse the membrane as a helical segment. Topologically, residues Gln67 to Asp71 are exoplasmic loop. Residues Val72 to Lys94 form a helical membrane-spanning segment. Topologically, residues Glu95–Gln276 are cytoplasmic. The helical transmembrane segment at Ile277–Trp298 threads the bilayer. The Exoplasmic loop segment spans residues Asn299–Leu323. The chain crosses the membrane as a helical span at residues Leu324–Val345. Residues Lys346 to Lys837 are Cytoplasmic-facing. Residue Asp388 is the 4-aspartylphosphate intermediate of the active site. The ATP site is built by Asp388, Lys389, Thr390, Glu488, Phe529, Lys552, Arg585, Thr665, Gly666, Asp667, Arg755, and Lys761. A Mg(2+)-binding site is contributed by Asp388. Mg(2+) is bound at residue Thr390. Asp781 serves as a coordination point for Mg(2+). ATP is bound by residues Asn784 and Asp785. Mg(2+) is bound at residue Asp785. A helical transmembrane segment spans residues Cys838–Phe858. At Val859 to Arg870 the chain is on the exoplasmic loop side. A helical membrane pass occupies residues Trp871–Ile890. Over Phe891–Val920 the chain is Cytoplasmic. The chain crosses the membrane as a helical span at residues Phe921–Ala942. Residues Leu943–Asp956 lie on the Exoplasmic loop side of the membrane. A helical transmembrane segment spans residues Tyr957 to Glu979. Topologically, residues Thr980–Lys985 are cytoplasmic. A helical membrane pass occupies residues Phe986 to Ser1006. The Exoplasmic loop portion of the chain corresponds to Thr1007–Met1024. A helical membrane pass occupies residues Val1025–Trp1049. At Arg1050–Lys1148 the chain is on the cytoplasmic side.

This sequence belongs to the cation transport ATPase (P-type) (TC 3.A.3) family. Type IV subfamily. As to quaternary structure, component of a P4-ATPase flippase complex which consists of a catalytic alpha subunit and an accessory beta subunit. Interacts with TMEM30A to form a flippase complex. It depends on Mg(2+) as a cofactor. Found in testis, heart and brain. Most abundant in testis. Also detected in fetal tissues. Expressed in retinal photoreceptor cells; detected in retina outer nuclear layer and inner segment (at protein level).

It is found in the membrane. Its subcellular location is the golgi apparatus membrane. The protein resides in the endosome membrane. It localises to the cell membrane. The protein localises to the photoreceptor outer segment membrane. It is found in the photoreceptor inner segment membrane. It catalyses the reaction ATP + H2O + phospholipidSide 1 = ADP + phosphate + phospholipidSide 2.. It carries out the reaction a 1,2-diacyl-sn-glycero-3-phospho-L-serine(out) + ATP + H2O = a 1,2-diacyl-sn-glycero-3-phospho-L-serine(in) + ADP + phosphate + H(+). The catalysed reaction is a 1,2-diacyl-sn-glycero-3-phosphoethanolamine(in) + ATP + H2O = a 1,2-diacyl-sn-glycero-3-phosphoethanolamine(out) + ADP + phosphate + H(+). Functionally, catalytic component of a P4-ATPase flippase complex which catalyzes the hydrolysis of ATP coupled to the transport of aminophospholipids from the outer to the inner leaflet of various membranes and ensures the maintenance of asymmetric distribution of phospholipids. Able to translocate phosphatidylserine, but not phosphatidylcholine. Phospholipid translocation also seems to be implicated in vesicle formation and in uptake of lipid signaling molecules. Reconstituted to liposomes, the ATP8A2:TMEM30A flippase complex predominantly transports phosphatidylserine (PS) and to a lesser extent phosphatidylethanolamine (PE). Phospholipid translocation is not associated with a countertransport of an inorganic ion or other charged substrate from the cytoplasmic side toward the exoplasm in connection with the phosphorylation from ATP. ATP8A2:TMEM30A may be involved in regulation of neurite outgrowth. Proposed to function in the generation and maintenance of phospholipid asymmetry in photoreceptor disk membranes and neuronal axon membranes. May be involved in vesicle trafficking in neuronal cells. Required for normal visual and auditory function; involved in photoreceptor and inner ear spiral ganglion cell survival. This is Phospholipid-transporting ATPase IB from Mus musculus (Mouse).